The sequence spans 122 residues: Large ribosomal subunit protein uL14 (122 aa).

It belongs to the universal ribosomal protein uL14 family. As to quaternary structure, part of the 50S ribosomal subunit. Forms a cluster with proteins L3 and L19. In the 70S ribosome, L14 and L19 interact and together make contacts with the 16S rRNA in bridges B5 and B8.

In terms of biological role, binds to 23S rRNA. Forms part of two intersubunit bridges in the 70S ribosome. This is Large ribosomal subunit protein uL14 from Rickettsia bellii (strain OSU 85-389).